Reading from the N-terminus, the 388-residue chain is 5-hydroxytryptamine receptor 4 (388 aa).

The Extracellular portion of the chain corresponds to 1–19 (MDKLDANVSSKEGFGSVEK). A glycan (N-linked (GlcNAc...) asparagine) is linked at asparagine 7. The helical transmembrane segment at 20–44 (VVLLTFLSAVILMAILGNLLVMVAV) threads the bilayer. The Cytoplasmic segment spans residues 45-54 (CRDRQLRKIK). Residues 55-78 (TNYFIVSLAFADLLVSVLVMPFGA) form a helical membrane-spanning segment. Over 79–92 (IELVQDIWVYGEMF) the chain is Extracellular. A helical membrane pass occupies residues 93-117 (CLVRTSLDVLLTTASIFHLCCISLD). A disulfide bond links cysteine 93 and cysteine 184. Aspartate 100 provides a ligand contact to serotonin. The Cytoplasmic segment spans residues 118–133 (RYYAICCQPLVYRNKM). Residues 134-157 (TPLRIALMLGGCWVIPMFISFLPI) traverse the membrane as a helical segment. Over 158–188 (MQGWNNIGIVDLIEKRKFNQNSNSTYCVFMV) the chain is Extracellular. Residues 189–212 (NKPYAITCSVVAFYIPFLLMVLAY) traverse the membrane as a helical segment. Residues 213–257 (YRIYVTAKEHARQIQVLQRAGAPAEGRPQPADQHSTHRMRTETKA) lie on the Cytoplasmic side of the membrane. Residues 258 to 283 (AKTLCIIMGCFCLCWAPFFVTNIVDP) traverse the membrane as a helical segment. Asparagine 279 serves as a coordination point for serotonin. The Extracellular segment spans residues 284-290 (FIDYTVP). A helical membrane pass occupies residues 291-314 (GQLWTAFLWLGYINSGLNPFLYAF). Topologically, residues 315–388 (LNKSFRRAFL…PLVAAQPIDT (74 aa)) are cytoplasmic.

This sequence belongs to the G-protein coupled receptor 1 family. In terms of assembly, interacts (via C-terminus 330-346 AA) with GRK5; this interaction is promoted by 5-HT (serotonin).

It is found in the cell membrane. It localises to the endosome membrane. In terms of biological role, G-protein coupled receptor for 5-hydroxytryptamine (serotonin), a biogenic hormone that functions as a neurotransmitter, a hormone and a mitogen. Ligand binding causes a conformation change that triggers signaling via guanine nucleotide-binding proteins (G proteins) and modulates the activity of downstream effectors. HTR4 is coupled to G(s) G alpha proteins and mediates activation of adenylate cyclase activity. This Cavia porcellus (Guinea pig) protein is 5-hydroxytryptamine receptor 4 (HTR4).